Consider the following 290-residue polypeptide: MDIEAYFERIGYNNPVYTLDLATLTEVLQHQMRTIPFENLNMHCGEAMDLGLEATFDQIVRKKRGGWCLQVNHLLYWALTQMGFETTMLGGYVYIVPVSKYSSEMIHLLVQVTISDRNYIVDAAYGGSYQMWEPVELASGKDQPQVPAIFRLTEENETWYLDQIRREQHVPNQEFVNSDLLEKNTYRKIYSFTLQPRTIEDFEYANTYLQISPVSVFVNTSFCSLQTSEGVCCLIGSTIARRKFSYKENVDLVEFKNVSEEEIEDVLKTAFGVSLERKFVPKNGNLSFSI.

Position 1 is an N-acetylmethionine (Met-1). Cys-68 serves as the catalytic Acyl-thioester intermediate. Ser-103 lines the CoA pocket. Residue 106–107 participates in substrate binding; that stretch reads IH. Catalysis depends on residues His-107 and Asp-122. CoA is bound by residues Tyr-208 and Ser-287.

Belongs to the arylamine N-acetyltransferase family.

The protein localises to the cytoplasm. It catalyses the reaction an arylamine + acetyl-CoA = an N-acetylarylamine + CoA. Functionally, participates in the detoxification of a plethora of hydrazine and arylamine drugs. This is Arylamine N-acetyltransferase 1 (NAT1) from Mesocricetus auratus (Golden hamster).